The chain runs to 315 residues: Ornithine carbamoyltransferase (315 aa).

Carbamoyl phosphate is bound by residues 57-60 (STRT), Q84, R108, and 135-138 (HPCQ). L-ornithine contacts are provided by residues N166, D230, and 234-235 (SM). Carbamoyl phosphate contacts are provided by residues 270–271 (CL) and R298.

The protein belongs to the aspartate/ornithine carbamoyltransferase superfamily. OTCase family.

It is found in the cytoplasm. It carries out the reaction carbamoyl phosphate + L-ornithine = L-citrulline + phosphate + H(+). It functions in the pathway amino-acid biosynthesis; L-arginine biosynthesis; L-arginine from L-ornithine and carbamoyl phosphate: step 1/3. Reversibly catalyzes the transfer of the carbamoyl group from carbamoyl phosphate (CP) to the N(epsilon) atom of ornithine (ORN) to produce L-citrulline. This chain is Ornithine carbamoyltransferase, found in Thermococcus kodakarensis (strain ATCC BAA-918 / JCM 12380 / KOD1) (Pyrococcus kodakaraensis (strain KOD1)).